A 392-amino-acid polypeptide reads, in one-letter code: Probable tRNA sulfurtransferase (392 aa).

A THUMP domain is found at 63 to 169; the sequence is GRAADAAADT…DAEAFVFLTH (107 aa). ATP contacts are provided by residues 187–188, Arg270, Gly292, and Gln301; that span reads LV.

The protein belongs to the ThiI family.

It is found in the cytoplasm. The catalysed reaction is [ThiI sulfur-carrier protein]-S-sulfanyl-L-cysteine + a uridine in tRNA + 2 reduced [2Fe-2S]-[ferredoxin] + ATP + H(+) = [ThiI sulfur-carrier protein]-L-cysteine + a 4-thiouridine in tRNA + 2 oxidized [2Fe-2S]-[ferredoxin] + AMP + diphosphate. It catalyses the reaction [ThiS sulfur-carrier protein]-C-terminal Gly-Gly-AMP + S-sulfanyl-L-cysteinyl-[cysteine desulfurase] + AH2 = [ThiS sulfur-carrier protein]-C-terminal-Gly-aminoethanethioate + L-cysteinyl-[cysteine desulfurase] + A + AMP + 2 H(+). It functions in the pathway cofactor biosynthesis; thiamine diphosphate biosynthesis. Its function is as follows. Catalyzes the ATP-dependent transfer of a sulfur to tRNA to produce 4-thiouridine in position 8 of tRNAs, which functions as a near-UV photosensor. Also catalyzes the transfer of sulfur to the sulfur carrier protein ThiS, forming ThiS-thiocarboxylate. This is a step in the synthesis of thiazole, in the thiamine biosynthesis pathway. The sulfur is donated as persulfide by IscS. This chain is Probable tRNA sulfurtransferase, found in Halobacterium salinarum (strain ATCC 29341 / DSM 671 / R1).